The chain runs to 145 residues: Large ribosomal subunit protein bL9 (145 aa).

The protein belongs to the bacterial ribosomal protein bL9 family.

Its function is as follows. Binds to the 23S rRNA. The sequence is that of Large ribosomal subunit protein bL9 from Mesomycoplasma hyopneumoniae (strain J / ATCC 25934 / NCTC 10110) (Mycoplasma hyopneumoniae).